A 401-amino-acid chain; its full sequence is Ribosomal protein uS12 methylthiotransferase RimO (401 aa).

The MTTase N-terminal domain maps to methionine 1 to arginine 108. Cysteine 10, cysteine 43, cysteine 72, cysteine 124, cysteine 128, and cysteine 131 together coordinate [4Fe-4S] cluster. Residues leucine 110–glutamate 339 enclose the Radical SAM core domain.

This sequence belongs to the methylthiotransferase family. RimO subfamily. [4Fe-4S] cluster serves as cofactor.

The protein resides in the cytoplasm. The enzyme catalyses L-aspartate(89)-[ribosomal protein uS12]-hydrogen + (sulfur carrier)-SH + AH2 + 2 S-adenosyl-L-methionine = 3-methylsulfanyl-L-aspartate(89)-[ribosomal protein uS12]-hydrogen + (sulfur carrier)-H + 5'-deoxyadenosine + L-methionine + A + S-adenosyl-L-homocysteine + 2 H(+). Its function is as follows. Catalyzes the methylthiolation of an aspartic acid residue of ribosomal protein uS12. The protein is Ribosomal protein uS12 methylthiotransferase RimO of Hydrogenobaculum sp. (strain Y04AAS1).